The following is a 741-amino-acid chain: Catalase-peroxidase 2 (741 aa).

The signal sequence occupies residues 1 to 28 (MQRNRIAKSVLAALAVIAMSAGSISARA). A cross-link (tryptophyl-tyrosyl-methioninium (Trp-Tyr) (with M-254)) is located at residues 107–228 (WHGAGTYRTY…LAATQMGLIY (122 aa)). Catalysis depends on histidine 108, which acts as the Proton acceptor. The segment at residues 228 to 254 (YVNPEGPNGNPDPVAAAQDIREAFGRM) is a cross-link (tryptophyl-tyrosyl-methioninium (Tyr-Met) (with W-107)). Residue histidine 269 coordinates heme b.

Belongs to the peroxidase family. Peroxidase/catalase subfamily. Homodimer or homotetramer. Heme b is required as a cofactor. Formation of the three residue Trp-Tyr-Met cross-link is important for the catalase, but not the peroxidase activity of the enzyme.

The enzyme catalyses H2O2 + AH2 = A + 2 H2O. It carries out the reaction 2 H2O2 = O2 + 2 H2O. Its function is as follows. Bifunctional enzyme with both catalase and broad-spectrum peroxidase activity. The protein is Catalase-peroxidase 2 of Burkholderia vietnamiensis (strain G4 / LMG 22486) (Burkholderia cepacia (strain R1808)).